The chain runs to 474 residues: tRNA-2-methylthio-N(6)-dimethylallyladenosine synthase (474 aa).

Positions 3 to 120 constitute an MTTase N-terminal domain; the sequence is KKLHIKTWGC…LPEMIDQIEA (118 aa). 6 residues coordinate [4Fe-4S] cluster: C12, C49, C83, C157, C161, and C164. A Radical SAM core domain is found at 143–375; the sequence is RADGPSAFVS…QDRITQQAMR (233 aa). A TRAM domain is found at 378–441; that stretch reads RQMLGTVQRI…TNSLRGNFIR (64 aa).

This sequence belongs to the methylthiotransferase family. MiaB subfamily. Monomer. It depends on [4Fe-4S] cluster as a cofactor.

The protein resides in the cytoplasm. It carries out the reaction N(6)-dimethylallyladenosine(37) in tRNA + (sulfur carrier)-SH + AH2 + 2 S-adenosyl-L-methionine = 2-methylsulfanyl-N(6)-dimethylallyladenosine(37) in tRNA + (sulfur carrier)-H + 5'-deoxyadenosine + L-methionine + A + S-adenosyl-L-homocysteine + 2 H(+). Its function is as follows. Catalyzes the methylthiolation of N6-(dimethylallyl)adenosine (i(6)A), leading to the formation of 2-methylthio-N6-(dimethylallyl)adenosine (ms(2)i(6)A) at position 37 in tRNAs that read codons beginning with uridine. This chain is tRNA-2-methylthio-N(6)-dimethylallyladenosine synthase, found in Shewanella woodyi (strain ATCC 51908 / MS32).